The sequence spans 368 residues: tRNA-specific 2-thiouridylase MnmA (368 aa).

ATP is bound by residues 10–17 and M36; that span reads AMSGGVDS. The active-site Nucleophile is the C108. A disulfide bridge links C108 with C206. G132 contributes to the ATP binding site. The interaction with tRNA stretch occupies residues 156–158; that stretch reads KDQ. Catalysis depends on C206, which acts as the Cysteine persulfide intermediate. An interaction with tRNA region spans residues 312–313; the sequence is RY.

The protein belongs to the MnmA/TRMU family.

It is found in the cytoplasm. The enzyme catalyses S-sulfanyl-L-cysteinyl-[protein] + uridine(34) in tRNA + AH2 + ATP = 2-thiouridine(34) in tRNA + L-cysteinyl-[protein] + A + AMP + diphosphate + H(+). Functionally, catalyzes the 2-thiolation of uridine at the wobble position (U34) of tRNA, leading to the formation of s(2)U34. The protein is tRNA-specific 2-thiouridylase MnmA of Natranaerobius thermophilus (strain ATCC BAA-1301 / DSM 18059 / JW/NM-WN-LF).